The chain runs to 207 residues: Inner membrane-spanning protein YciB (207 aa).

The next 6 membrane-spanning stretches (helical) occupy residues 3–23 (FLFDLLPIVLFFVAFKVAEGQ), 51–71 (VLLATLVVIVATFAQIGWLLL), 78–98 (TMLWVSLGLVTVLGGATVWFH), 105–125 (WKPSVLYWVMGTAFWLSHAVF), 150–170 (FMWIAFFAFMGLANLYVAYSF), and 178–198 (FKLFGGVGLMLLFTLAQGLYL).

It belongs to the YciB family.

The protein localises to the cell inner membrane. Plays a role in cell envelope biogenesis, maintenance of cell envelope integrity and membrane homeostasis. The polypeptide is Inner membrane-spanning protein YciB (Methylibium petroleiphilum (strain ATCC BAA-1232 / LMG 22953 / PM1)).